The sequence spans 210 residues: Imidazoleglycerol-phosphate dehydratase (210 aa).

The protein belongs to the imidazoleglycerol-phosphate dehydratase family.

The catalysed reaction is D-erythro-1-(imidazol-4-yl)glycerol 3-phosphate = 3-(imidazol-4-yl)-2-oxopropyl phosphate + H2O. It functions in the pathway amino-acid biosynthesis; L-histidine biosynthesis; L-histidine from 5-phospho-alpha-D-ribose 1-diphosphate: step 6/9. This is Imidazoleglycerol-phosphate dehydratase (HIS3) from Candida glabrata (strain ATCC 2001 / BCRC 20586 / JCM 3761 / NBRC 0622 / NRRL Y-65 / CBS 138) (Yeast).